The primary structure comprises 339 residues: MTIRVAINGFGRIGRNVLRALYESGKRAEISVVAINELADATGIAHLLKYDSSHGRFAWDIRVNNDLLQVGDDAIRLFHHADIADLPWGELGIDVVLDCSGVYGSRADGEAHIAQGAKKVLFSHPGTIDLDATVVFGVNQHELKKQHRIVSNASCTTNCIIPIIKMMDDAFGIESGTVTTIHAAMNDQPVIDAYHKDLRRTRAAGQSIIPVDTKLAAGITRIFPKFKDHFEAISVRVPTINVTAIDLSVTVKNAVNVLDVNKLIQKSATGAFRGIVDYTELPLVSTDFNHDPHSAIVDGTQTRVSGQHLIKTLVWCDNEWGFANRMLDTTLAMAATGFK.

Position 12 to 13 (12 to 13 (RI)) interacts with NAD(+). Substrate-binding positions include 154–156 (SCT), arginine 200, 213–214 (TK), and arginine 236. Cysteine 155 acts as the Nucleophile in catalysis. Asparagine 318 lines the NAD(+) pocket.

Belongs to the glyceraldehyde-3-phosphate dehydrogenase family. Epd subfamily. As to quaternary structure, homotetramer.

It localises to the cytoplasm. It catalyses the reaction D-erythrose 4-phosphate + NAD(+) + H2O = 4-phospho-D-erythronate + NADH + 2 H(+). It participates in cofactor biosynthesis; pyridoxine 5'-phosphate biosynthesis; pyridoxine 5'-phosphate from D-erythrose 4-phosphate: step 1/5. Its function is as follows. Catalyzes the NAD-dependent conversion of D-erythrose 4-phosphate to 4-phosphoerythronate. This is D-erythrose-4-phosphate dehydrogenase from Proteus mirabilis (strain HI4320).